We begin with the raw amino-acid sequence, 384 residues long: 4-hydroxy-3-methylbut-2-en-1-yl diphosphate synthase (flavodoxin) (384 aa).

Cysteine 272, cysteine 275, cysteine 307, and glutamate 314 together coordinate [4Fe-4S] cluster.

Belongs to the IspG family. Requires [4Fe-4S] cluster as cofactor.

It catalyses the reaction (2E)-4-hydroxy-3-methylbut-2-enyl diphosphate + oxidized [flavodoxin] + H2O + 2 H(+) = 2-C-methyl-D-erythritol 2,4-cyclic diphosphate + reduced [flavodoxin]. It functions in the pathway isoprenoid biosynthesis; isopentenyl diphosphate biosynthesis via DXP pathway; isopentenyl diphosphate from 1-deoxy-D-xylulose 5-phosphate: step 5/6. Converts 2C-methyl-D-erythritol 2,4-cyclodiphosphate (ME-2,4cPP) into 1-hydroxy-2-methyl-2-(E)-butenyl 4-diphosphate. The protein is 4-hydroxy-3-methylbut-2-en-1-yl diphosphate synthase (flavodoxin) of Rhodospirillum rubrum (strain ATCC 11170 / ATH 1.1.1 / DSM 467 / LMG 4362 / NCIMB 8255 / S1).